A 1190-amino-acid polypeptide reads, in one-letter code: Isoleucine--tRNA ligase, cytoplasmic (1190 aa).

The short motif at 49–59 (PFATGLPHYGH) is the 'HIGH' region element. Residues 271–299 (DKPKAKLSNGPAGDTKKANPKAKGAKPES) are disordered. Residues 632–636 (KMAKK) carry the 'KMSKS' region motif. Lysine 635 is a binding site for ATP.

It belongs to the class-I aminoacyl-tRNA synthetase family.

It localises to the cytoplasm. It is found in the cytosol. It carries out the reaction tRNA(Ile) + L-isoleucine + ATP = L-isoleucyl-tRNA(Ile) + AMP + diphosphate. The protein is Isoleucine--tRNA ligase, cytoplasmic of Arabidopsis thaliana (Mouse-ear cress).